A 179-amino-acid chain; its full sequence is Large ribosomal subunit protein uL5 (179 aa).

It belongs to the universal ribosomal protein uL5 family. Part of the 50S ribosomal subunit; part of the 5S rRNA/L5/L18/L25 subcomplex. Contacts the 5S rRNA and the P site tRNA. Forms a bridge to the 30S subunit in the 70S ribosome.

Its function is as follows. This is one of the proteins that bind and probably mediate the attachment of the 5S RNA into the large ribosomal subunit, where it forms part of the central protuberance. In the 70S ribosome it contacts protein S13 of the 30S subunit (bridge B1b), connecting the 2 subunits; this bridge is implicated in subunit movement. Contacts the P site tRNA; the 5S rRNA and some of its associated proteins might help stabilize positioning of ribosome-bound tRNAs. The polypeptide is Large ribosomal subunit protein uL5 (Pseudomonas fluorescens (strain SBW25)).